Reading from the N-terminus, the 152-residue chain is UPF0260 protein BR1477/BS1330_I1471 (152 aa).

Belongs to the UPF0260 family.

This chain is UPF0260 protein BR1477/BS1330_I1471, found in Brucella suis biovar 1 (strain 1330).